A 646-amino-acid polypeptide reads, in one-letter code: Long-chain fatty acid transport protein 1 (646 aa).

Residues 1 to 13 (MRAPGAGSASVAS) lie on the Extracellular side of the membrane. The helical transmembrane segment at 14-34 (LVLLWLLGLPWTWSTAAALGV) threads the bilayer. At 35–646 (YVGGGGWRFL…TRICSGAFAL (612 aa)) the chain is on the cytoplasmic side. A sufficient for oligomerization region spans residues 191–475 (EMSGELGKSL…YISESATSKK (285 aa)). Position 246 to 257 (246 to 257 (YIYTSGTTGLPK)) interacts with AMP.

The protein belongs to the ATP-dependent AMP-binding enzyme family. As to quaternary structure, self-associates. May function as a homodimer. Interacts with EPRS1; mediates the translocation of SLC27A1 from the cytoplasm to the plasma membrane thereby increasing the uptake of long-chain fatty acids. Interacts with DGAT2 and this interaction is enhanced in the presence of ZFYVE1.

It is found in the cell membrane. Its subcellular location is the endomembrane system. The protein resides in the cytoplasm. It catalyses the reaction a fatty acid(in) = a fatty acid(out). The enzyme catalyses (9Z)-octadecenoate(out) = (9Z)-octadecenoate(in). The catalysed reaction is hexadecanoate(out) = hexadecanoate(in). It carries out the reaction (5Z,8Z,11Z,14Z)-eicosatetraenoate(out) = (5Z,8Z,11Z,14Z)-eicosatetraenoate(in). It catalyses the reaction (9Z,12Z)-octadecadienoate(out) = (9Z,12Z)-octadecadienoate(in). The enzyme catalyses a long-chain fatty acid + ATP + CoA = a long-chain fatty acyl-CoA + AMP + diphosphate. The catalysed reaction is (5Z,8Z,11Z,14Z)-eicosatetraenoate + ATP + CoA = (5Z,8Z,11Z,14Z)-eicosatetraenoyl-CoA + AMP + diphosphate. It carries out the reaction a very long-chain fatty acid + ATP + CoA = a very long-chain fatty acyl-CoA + AMP + diphosphate. It catalyses the reaction tetracosanoate + ATP + CoA = tetracosanoyl-CoA + AMP + diphosphate. Its activity is regulated as follows. Inhibited by Triacsin C. Functionally, mediates the import of long-chain fatty acids (LCFA) into the cell by facilitating their transport at the plasma membrane. Also functions as an acyl-CoA ligase catalyzing the ATP-dependent formation of fatty acyl-CoA using LCFA and very-long-chain fatty acids (VLCFA) as substrates, which prevents fatty acid efflux from cells and might drive more fatty acid uptake. May act directly as a bona fide transporter, or alternatively, in a cytoplasmic or membrane-associated multimeric protein complex to trap and draw fatty acids towards accumulation. Plays a pivotal role in regulating available LCFA substrates from exogenous sources in tissues undergoing high levels of beta-oxidation or triglyceride synthesis. May be involved in regulation of cholesterol metabolism. Probably involved in fatty acid transport across the blood barrier. The protein is Long-chain fatty acid transport protein 1 of Bos taurus (Bovine).